Here is a 303-residue protein sequence, read N- to C-terminus: UDP-3-O-acyl-N-acetylglucosamine deacetylase (303 aa).

Residues His78, His237, and Asp241 each coordinate Zn(2+). The active-site Proton donor is the His264.

Belongs to the LpxC family. Requires Zn(2+) as cofactor.

It catalyses the reaction a UDP-3-O-[(3R)-3-hydroxyacyl]-N-acetyl-alpha-D-glucosamine + H2O = a UDP-3-O-[(3R)-3-hydroxyacyl]-alpha-D-glucosamine + acetate. The protein operates within glycolipid biosynthesis; lipid IV(A) biosynthesis; lipid IV(A) from (3R)-3-hydroxytetradecanoyl-[acyl-carrier-protein] and UDP-N-acetyl-alpha-D-glucosamine: step 2/6. In terms of biological role, catalyzes the hydrolysis of UDP-3-O-myristoyl-N-acetylglucosamine to form UDP-3-O-myristoylglucosamine and acetate, the committed step in lipid A biosynthesis. This chain is UDP-3-O-acyl-N-acetylglucosamine deacetylase, found in Pseudomonas entomophila (strain L48).